The following is a 363-amino-acid chain: MASAVLSSVPTTASRFALLQVDSGSGSDSEPGKGKGRNTGKSQTNKSTTNEKKREKRRKKKEQQQSEANELRNLAFKKIPQKSSHAICNAQHELSLPNPVQKDSREENWQEWRQRDEQLTSEMFEADLEKALLLSKLEYEEHKKEYENAENASTQSKVMNKKDKRKTHQGKDKPLTISLKEFQSEDHISKKTEELSSQILSHDGGFFNRLEDDVHKILTREKRREQLTEYNGTDNYTVHEHNQEVVLKDGRIERLKLELERKDAEIQKLKNVIAQWEAKYKEVKARNAQLLKMLQEGEMKDKAEILLQVDESQSIKNELTIQVTSLHAALEQERSKVKVLQAELAKYQGGRKGKRNSESDQCR.

The tract at residues 1-93 is interaction with IRS1; sequence MASAVLSSVP…SHAICNAQHE (93 aa). Disordered stretches follow at residues 20-111 and 145-171; these read QVDS…NWQE and EYEN…HQGK. Phosphoserine occurs at positions 23, 25, and 27. Over residues 39 to 48 the composition is skewed to polar residues; the sequence is TGKSQTNKST. A coiled-coil region spans residues 43–75; sequence QTNKSTTNEKKREKRRKKKEQQQSEANELRNLA. Residues 102-111 show a composition bias toward basic and acidic residues; that stretch reads KDSREENWQE. Residue serine 104 is modified to Phosphoserine; by PKG. Coiled coils occupy residues 126–158 and 240–350; these read ADLE…QSKV and EHNQ…YQGG.

This sequence belongs to the GKAP1 family. Interacts with PRKG1 and IRS1.

Its subcellular location is the golgi apparatus. Its function is as follows. Regulates insulin-dependent IRS1 tyrosine phosphorylation in adipocytes by modulating the availability of IRS1 to IR tyrosine kinase. Its association with IRS1 is required for insulin-induced translocation of SLC2A4 to the cell membrane. Involved in TNF-induced impairment of insulin-dependent IRS1 tyrosine phosphorylation. This chain is G kinase-anchoring protein 1 (GKAP1), found in Bos taurus (Bovine).